The chain runs to 611 residues: Protein PES4 (611 aa).

The tract at residues 37 to 81 (FNPVVTPIRPDDYHEKTSRSSSSSHSDSPEFLRINNNKSGHKNGK) is disordered. Residues 45–54 (RPDDYHEKTS) are compositionally biased toward basic and acidic residues. RRM domains follow at residues 91–169 (VPLF…PSLR), 179–247 (TNVF…GKKI), 303–379 (NSIF…RAQD), and 393–471 (STLF…WERQ).

Its subcellular location is the nucleus. The protein is Protein PES4 (PES4) of Saccharomyces cerevisiae (strain ATCC 204508 / S288c) (Baker's yeast).